The following is a 229-amino-acid chain: Cytochrome c oxidase subunit 2 (229 aa).

Topologically, residues 1–14 are mitochondrial intermembrane; that stretch reads MAQQAQLGLQDAAS. Residues 15-45 form a helical membrane-spanning segment; it reads PIMEELIHFHDHTLTVVFLISVLIFYLIIVM. Over 46–59 the chain is Mitochondrial matrix; sequence VTTTFMNKHSLDSQ. The helical transmembrane segment at 60-87 threads the bilayer; sequence EVEIVWTVMPAIVLITIALPSLRILYLT. Topologically, residues 88-229 are mitochondrial intermembrane; it reads DEISNPHLTI…ENWTTKVLAS (142 aa). Cu cation contacts are provided by His-161, Cys-196, Glu-198, Cys-200, His-204, and Met-207. Glu-198 lines the Mg(2+) pocket.

The protein belongs to the cytochrome c oxidase subunit 2 family. Component of the cytochrome c oxidase (complex IV, CIV), a multisubunit enzyme composed of 14 subunits. The complex is composed of a catalytic core of 3 subunits MT-CO1, MT-CO2 and MT-CO3, encoded in the mitochondrial DNA, and 11 supernumerary subunits COX4I, COX5A, COX5B, COX6A, COX6B, COX6C, COX7A, COX7B, COX7C, COX8 and NDUFA4, which are encoded in the nuclear genome. The complex exists as a monomer or a dimer and forms supercomplexes (SCs) in the inner mitochondrial membrane with NADH-ubiquinone oxidoreductase (complex I, CI) and ubiquinol-cytochrome c oxidoreductase (cytochrome b-c1 complex, complex III, CIII), resulting in different assemblies (supercomplex SCI(1)III(2)IV(1) and megacomplex MCI(2)III(2)IV(2)). Found in a complex with TMEM177, COA6, COX18, COX20, SCO1 and SCO2. Interacts with TMEM177 in a COX20-dependent manner. Interacts with COX20. Interacts with COX16. Cu cation serves as cofactor.

Its subcellular location is the mitochondrion inner membrane. The catalysed reaction is 4 Fe(II)-[cytochrome c] + O2 + 8 H(+)(in) = 4 Fe(III)-[cytochrome c] + 2 H2O + 4 H(+)(out). Functionally, component of the cytochrome c oxidase, the last enzyme in the mitochondrial electron transport chain which drives oxidative phosphorylation. The respiratory chain contains 3 multisubunit complexes succinate dehydrogenase (complex II, CII), ubiquinol-cytochrome c oxidoreductase (cytochrome b-c1 complex, complex III, CIII) and cytochrome c oxidase (complex IV, CIV), that cooperate to transfer electrons derived from NADH and succinate to molecular oxygen, creating an electrochemical gradient over the inner membrane that drives transmembrane transport and the ATP synthase. Cytochrome c oxidase is the component of the respiratory chain that catalyzes the reduction of oxygen to water. Electrons originating from reduced cytochrome c in the intermembrane space (IMS) are transferred via the dinuclear copper A center (CU(A)) of subunit 2 and heme A of subunit 1 to the active site in subunit 1, a binuclear center (BNC) formed by heme A3 and copper B (CU(B)). The BNC reduces molecular oxygen to 2 water molecules using 4 electrons from cytochrome c in the IMS and 4 protons from the mitochondrial matrix. The sequence is that of Cytochrome c oxidase subunit 2 (MT-CO2) from Petromyzon marinus (Sea lamprey).